The following is a 138-amino-acid chain: Beta-lactamase HcpB (138 aa).

TPR repeat units follow at residues 1 to 28 (MVGG…NEMF), 57 to 94 (GNGC…NDQD), and 97 to 130 (LILG…GSED). Intrachain disulfides connect Cys-22–Cys-30, Cys-52–Cys-60, Cys-88–Cys-96, and Cys-124–Cys-132.

It belongs to the hcp beta-lactamase family.

It carries out the reaction a beta-lactam + H2O = a substituted beta-amino acid. In terms of biological role, hydrolyzes 6-aminopenicillinic acid and 7-aminocephalosporanic acid (ACA) derivatives. In Helicobacter pylori (strain ATCC 700392 / 26695) (Campylobacter pylori), this protein is Beta-lactamase HcpB (hcpB).